The chain runs to 620 residues: 1-deoxy-D-xylulose-5-phosphate synthase (620 aa).

Thiamine diphosphate-binding positions include His-80 and 121 to 123 (GHS). Asp-152 serves as a coordination point for Mg(2+). Thiamine diphosphate-binding positions include 153-154 (GA), Asn-181, Tyr-288, and Glu-370. Asn-181 is a Mg(2+) binding site.

It belongs to the transketolase family. DXPS subfamily. In terms of assembly, homodimer. Mg(2+) is required as a cofactor. Thiamine diphosphate serves as cofactor.

The enzyme catalyses D-glyceraldehyde 3-phosphate + pyruvate + H(+) = 1-deoxy-D-xylulose 5-phosphate + CO2. It participates in metabolic intermediate biosynthesis; 1-deoxy-D-xylulose 5-phosphate biosynthesis; 1-deoxy-D-xylulose 5-phosphate from D-glyceraldehyde 3-phosphate and pyruvate: step 1/1. In terms of biological role, catalyzes the acyloin condensation reaction between C atoms 2 and 3 of pyruvate and glyceraldehyde 3-phosphate to yield 1-deoxy-D-xylulose-5-phosphate (DXP). This Klebsiella pneumoniae subsp. pneumoniae (strain ATCC 700721 / MGH 78578) protein is 1-deoxy-D-xylulose-5-phosphate synthase.